We begin with the raw amino-acid sequence, 287 residues long: MAGAKEIRSKIASVQNTQKITKAMEMVAASKMRKSQERMAASRPYADTMRKVIGHLANGNLEYKHPYLEERDVKRVGYLVVSTDRGLCGGLNINLFKKLLAEMKAWSDKGVQCDLAMIGSKGVSFFNAVGGNVVAQVTGMGDNPSLSELIGPVKVMLQAYDEGRLDKLYVVSNKFINTMSQVPTITQLLPLPASEDADLKRKSWDYLYEPDPKALLDTLLRRYVESQVYQGVVENLASEQAARMVAMKAATDNGGSLIKELQLVYNKARQASITQELTEIVGGASAV.

It belongs to the ATPase gamma chain family. As to quaternary structure, F-type ATPases have 2 components, CF(1) - the catalytic core - and CF(0) - the membrane proton channel. CF(1) has five subunits: alpha(3), beta(3), gamma(1), delta(1), epsilon(1). CF(0) has three main subunits: a, b and c.

Its subcellular location is the cell inner membrane. Its function is as follows. Produces ATP from ADP in the presence of a proton gradient across the membrane. The gamma chain is believed to be important in regulating ATPase activity and the flow of protons through the CF(0) complex. This chain is ATP synthase gamma chain, found in Klebsiella pneumoniae (strain 342).